Consider the following 326-residue polypeptide: G-protein coupled receptor 171 (326 aa).

Residues 1–19 (MTNSSMFCPIYRDLEPFTY) are Extracellular-facing. A helical membrane pass occupies residues 20–40 (FFYLVYLIGIIGSCFATWAFI). The Cytoplasmic segment spans residues 41–48 (QKSTNHRC). A helical transmembrane segment spans residues 49–69 (VSIYLINLLTADFLLTLALPV). Over 70–89 (KIVVDLGVAPWKLRIFHCQV) the chain is Extracellular. An intrachain disulfide couples Cys87 to Cys165. The chain crosses the membrane as a helical span at residues 90–110 (TACLIYINMYLSIIFLAFVSI). Topologically, residues 111-133 (DRCLQLVHSCKIYRIQEPGFAKM) are cytoplasmic. The chain crosses the membrane as a helical span at residues 134-154 (ISAVVWLMVLLIMVPNMVIPI). At 155-182 (KNIKEKSNVGCMEFKREFGKNWHLLTNF) the chain is on the extracellular side. The chain crosses the membrane as a helical span at residues 183–203 (ICVAIFLNFSAIILISNFLVI). Over 204–221 (RQLYRNRDNANYPSVKSA) the chain is Cytoplasmic. The helical transmembrane segment at 222–242 (LLNILLVTASYIICFVPYHAV) threads the bilayer. The Extracellular portion of the chain corresponds to 243–268 (RIPYTLSQTEVISDCSTRIALFKAKE). The helical transmembrane segment at 269-289 (ATLLLAVSNLCFDPILYYHLS) threads the bilayer. Topologically, residues 290–326 (KAFRLKVTETFASPQKMKAREEKPRRENDVQSTGSAC) are cytoplasmic. The disordered stretch occupies residues 305 to 326 (KMKAREEKPRRENDVQSTGSAC). Residues 307-318 (KAREEKPRREND) show a composition bias toward basic and acidic residues.

Belongs to the G-protein coupled receptor 1 family.

The protein resides in the cell membrane. Its function is as follows. G-protein coupled receptor for Big LEN, a 16-amino acid neuropeptide produced from the precursor protein, proSAAS (encoded by PCSK1N). Acts through a G(i)-alpha-mediated pathway in response to Big LEN. Big LEN-GPR171 system plays an important role in regulating feeding and metabolism. Also plays a role in modulating fear and anxiety-like behaviors in the basolateral amygdala. Big LEN-GPR171 modulates the mu-type opioid receptor signaling and antinociception. Acts as a negative regulator T cell function. The polypeptide is G-protein coupled receptor 171 (Rattus norvegicus (Rat)).